The primary structure comprises 464 residues: MSKKIASARISEKSSKLLQDLNNSLPFDKVLYREDIEGSRAHAFMLSEQGIISREDQEKIDAGLQDILADIESGLFKLEGDDEDIHMAIEGELTRRIGDAGKRLHTARSRNDQVALDFRLYVQRNTKTIAELLLKNIETFVKVAEENAETMLPGMTHLQHAQPINFGYHMMAYASMFKRDYERFMSSYERNNYSPIGCAALAGTPHPINRQTTSDKLGFNAPTLNCLDTVSDRDFALEILFNISTVMMHMSRLSEELILWSAAEFKWVTLSDRHATGSSIMPQKKNPDIPELLRGKTGRVNGNLVALLTVMKSLPLAYNKDMQEDKEGVFDSVRTAILSLQVLEEMIADMTVNKEAMERACMVGHLSATDLADYLVKEQGLPFRDAYHITGNVVNLAEEKGLDISELSLEDLQSIDERIAEDVVALLDNRASMNARQSEGGTATVRTLEQIEDLKKWLEKQDEK.

The protein belongs to the lyase 1 family. Argininosuccinate lyase subfamily.

Its subcellular location is the cytoplasm. The catalysed reaction is 2-(N(omega)-L-arginino)succinate = fumarate + L-arginine. The protein operates within amino-acid biosynthesis; L-arginine biosynthesis; L-arginine from L-ornithine and carbamoyl phosphate: step 3/3. This chain is Argininosuccinate lyase, found in Sulfurovum sp. (strain NBC37-1).